Consider the following 157-residue polypeptide: Probable succinate transporter subunit YjjB (157 aa).

Helical transmembrane passes span 8–28 (FALA…AMVF), 57–77 (LNIE…GIQW), 87–107 (VFTV…TAMI), and 129–149 (FLTA…PGLW).

The protein belongs to the ThrE exporter (TC 2.A.79) family. As to quaternary structure, the transporter is composed of YjjB and YjjP.

The protein localises to the cell inner membrane. Involved in succinate export with YjjP. Both proteins are required for export. The sequence is that of Probable succinate transporter subunit YjjB from Shigella boydii serotype 4 (strain Sb227).